We begin with the raw amino-acid sequence, 359 residues long: tRNA N6-adenosine threonylcarbamoyltransferase (359 aa).

Positions 115 and 119 each coordinate Fe cation. Substrate contacts are provided by residues 137–141 (LVSGG), aspartate 170, glycine 183, and asparagine 283. Aspartate 311 serves as a coordination point for Fe cation. The disordered stretch occupies residues 328-359 (APDSLDIAPRSRWPLDEKSAPVFGTGRRGAKA).

It belongs to the KAE1 / TsaD family. The cofactor is Fe(2+).

The protein localises to the cytoplasm. It catalyses the reaction L-threonylcarbamoyladenylate + adenosine(37) in tRNA = N(6)-L-threonylcarbamoyladenosine(37) in tRNA + AMP + H(+). Functionally, required for the formation of a threonylcarbamoyl group on adenosine at position 37 (t(6)A37) in tRNAs that read codons beginning with adenine. Is involved in the transfer of the threonylcarbamoyl moiety of threonylcarbamoyl-AMP (TC-AMP) to the N6 group of A37, together with TsaE and TsaB. TsaD likely plays a direct catalytic role in this reaction. This is tRNA N6-adenosine threonylcarbamoyltransferase from Brucella melitensis biotype 2 (strain ATCC 23457).